The sequence spans 248 residues: Myelin protein P0 (248 aa).

The N-terminal stretch at 1–29 is a signal peptide; sequence MAPGAPSSSPSPILAVLLFSSLVLSPAQA. The 114-residue stretch at 30-143 folds into the Ig-like V-type domain; that stretch reads IVVYTDREVH…DIVGKTSQVT (114 aa). Residues 30–153 are Extracellular-facing; the sequence is IVVYTDREVH…LYVFEKVPTR (124 aa). An intrachain disulfide couples cysteine 50 to cysteine 127. N-linked (GlcNAc...) (complex) asparagine glycosylation occurs at asparagine 122. A helical membrane pass occupies residues 154-179; sequence YGVVLGAVIGGVLGVVLLLLLLFYVV. The Cytoplasmic portion of the chain corresponds to 180 to 248; that stretch reads RYCWLRRQAA…GLGESRKDKK (69 aa). At serine 210 the chain carries Phosphoserine; by PKC. A disordered region spans residues 224–248; the sequence is DHSRSTKAVSEKKAKGLGESRKDKK. Phosphoserine occurs at positions 226 and 228. Residues serine 233 and serine 243 each carry the phosphoserine; by PKC modification.

This sequence belongs to the myelin P0 protein family. Homodimer and homotetramer. Post-translationally, N-glycosylated; contains sulfate-substituted glycan. Found only in peripheral nervous system Schwann cells.

The protein localises to the cell membrane. It is found in the myelin membrane. Its function is as follows. Is an adhesion molecule necessary for normal myelination in the peripheral nervous system. It mediates adhesion between adjacent myelin wraps and ultimately drives myelin compaction. This chain is Myelin protein P0 (MPZ), found in Homo sapiens (Human).